The chain runs to 1007 residues: Beta-galactosidase A (1007 aa).

Residues 1–18 form the signal peptide; sequence MKLSSACAIALLAAQAAG. Substrate-binding positions include Y96 and 140-142; that span reads NAE. Residue N156 is glycosylated (N-linked (GlcNAc...) asparagine). N199 contributes to the substrate binding site. E200 functions as the Proton donor in the catalytic mechanism. Cystine bridges form between C205/C206 and C266/C315. Residue E298 is the Nucleophile of the active site. Substrate is bound at residue Y364. N-linked (GlcNAc...) asparagine glycans are attached at residues N402, N422, N478, N522, N622, N739, N760, N777, N805, and N914.

The protein belongs to the glycosyl hydrolase 35 family.

Its subcellular location is the secreted. The catalysed reaction is Hydrolysis of terminal non-reducing beta-D-galactose residues in beta-D-galactosides.. Its function is as follows. Cleaves beta-linked terminal galactosyl residues from gangliosides, glycoproteins, and glycosaminoglycans. In Aspergillus niger (strain ATCC MYA-4892 / CBS 513.88 / FGSC A1513), this protein is Beta-galactosidase A (lacA).